We begin with the raw amino-acid sequence, 309 residues long: ADP-L-glycero-D-manno-heptose-6-epimerase (309 aa).

NADP(+)-binding positions include 10-11, 31-32, Lys38, Lys53, 75-79, and Asn92; these read LI, DN, and QGACS. Residue Tyr139 is the Proton acceptor of the active site. Lys143 lines the NADP(+) pocket. Residue Asn168 coordinates substrate. 2 residues coordinate NADP(+): Val169 and Lys177. Lys177 functions as the Proton acceptor in the catalytic mechanism. Substrate contacts are provided by residues Ser179, His186, 200 to 203, Arg208, and Tyr271; that span reads FAGS.

This sequence belongs to the NAD(P)-dependent epimerase/dehydratase family. HldD subfamily. Homopentamer. Requires NADP(+) as cofactor.

It catalyses the reaction ADP-D-glycero-beta-D-manno-heptose = ADP-L-glycero-beta-D-manno-heptose. Its pathway is nucleotide-sugar biosynthesis; ADP-L-glycero-beta-D-manno-heptose biosynthesis; ADP-L-glycero-beta-D-manno-heptose from D-glycero-beta-D-manno-heptose 7-phosphate: step 4/4. Its function is as follows. Catalyzes the interconversion between ADP-D-glycero-beta-D-manno-heptose and ADP-L-glycero-beta-D-manno-heptose via an epimerization at carbon 6 of the heptose. The protein is ADP-L-glycero-D-manno-heptose-6-epimerase of Histophilus somni (strain 2336) (Haemophilus somnus).